Here is a 790-residue protein sequence, read N- to C-terminus: cAMP and cAMP-inhibited cGMP 3',5'-cyclic phosphodiesterase 10A (790 aa).

Residues 290-291 (RC), 334-335 (IA), threonine 368, glutamine 387, and histidine 519 contribute to the 3',5'-cyclic AMP site. In terms of domain architecture, PDEase spans 446-763 (TSEEWQGLMR…NQWEKVIRGE (318 aa)). Catalysis depends on histidine 519, which acts as the Proton donor. Histidine 519 lines the 3',5'-cyclic GMP pocket. The a divalent metal cation site is built by histidine 523, histidine 557, aspartate 558, and aspartate 668. Glutamine 720 is a 3',5'-cyclic AMP binding site. Glutamine 720 contacts 3',5'-cyclic GMP. Residues 768 to 790 (WISGPGPAPSKSTPEKLNVKVED) form a disordered region. Over residues 780 to 790 (TPEKLNVKVED) the composition is skewed to basic and acidic residues.

The protein belongs to the cyclic nucleotide phosphodiesterase family. In terms of assembly, homodimer. Requires a divalent metal cation as cofactor. As to expression, detected in striatum (at protein level). Detected in testis and brain.

It localises to the cytoplasm. It is found in the cytosol. The enzyme catalyses a nucleoside 3',5'-cyclic phosphate + H2O = a nucleoside 5'-phosphate + H(+). It catalyses the reaction 3',5'-cyclic AMP + H2O = AMP + H(+). It carries out the reaction 3',5'-cyclic GMP + H2O = GMP + H(+). The protein operates within purine metabolism; 3',5'-cyclic AMP degradation; AMP from 3',5'-cyclic AMP: step 1/1. It participates in purine metabolism; 3',5'-cyclic GMP degradation; GMP from 3',5'-cyclic GMP: step 1/1. Plays a role in signal transduction by regulating the intracellular concentration of cyclic nucleotides. Can hydrolyze both cAMP and cGMP, but has higher affinity for cAMP and is more efficient with cAMP as substrate. May play a critical role in regulating cAMP and cGMP levels in the striatum, a region of the brain that contributes to the control of movement and cognition. The polypeptide is cAMP and cAMP-inhibited cGMP 3',5'-cyclic phosphodiesterase 10A (Pde10a) (Mus musculus (Mouse)).